Here is a 210-residue protein sequence, read N- to C-terminus: Hydrogenase expression/formation protein HupD (210 aa).

Glu22, Asp68, and His99 together coordinate Ni(2+).

The protein belongs to the peptidase A31 family.

Not known. Could be involved in the processing of hydrogenase. The sequence is that of Hydrogenase expression/formation protein HupD (hupD) from Rhodobacter capsulatus (Rhodopseudomonas capsulata).